The sequence spans 362 residues: Peptide chain release factor 1 (362 aa).

N5-methylglutamine is present on glutamine 240.

Belongs to the prokaryotic/mitochondrial release factor family. Methylated by PrmC. Methylation increases the termination efficiency of RF1.

It is found in the cytoplasm. Peptide chain release factor 1 directs the termination of translation in response to the peptide chain termination codons UAG and UAA. This is Peptide chain release factor 1 from Bifidobacterium adolescentis (strain ATCC 15703 / DSM 20083 / NCTC 11814 / E194a).